The primary structure comprises 244 residues: MSVLDLNALNELPKVERVMALAETNAQLEKQDAEGRVAWALENLPGEYVLSSSFGIQAAVSLHLVNQVRPDIPVILTDTGYLFPETYQFIDELTEKLNLNLKVYRATESAAWQEARYGKLWEQGVEGIEKYNDINKVEPMNRALKELNAQTWFAGLRREQSGSRAHLPVLAIQRGVFKVLPIIDWDNRTVYQYLQKHGLKYHPLWDQGYLSVGDTHTTRKWEPGMAEEETRFFGLKRECGLHEG.

The active-site Nucleophile; cysteine thiosulfonate intermediate is the Cys-239.

This sequence belongs to the PAPS reductase family. CysH subfamily.

It is found in the cytoplasm. The catalysed reaction is [thioredoxin]-disulfide + sulfite + adenosine 3',5'-bisphosphate + 2 H(+) = [thioredoxin]-dithiol + 3'-phosphoadenylyl sulfate. It functions in the pathway sulfur metabolism; hydrogen sulfide biosynthesis; sulfite from sulfate: step 3/3. In terms of biological role, catalyzes the formation of sulfite from phosphoadenosine 5'-phosphosulfate (PAPS) using thioredoxin as an electron donor. This chain is Phosphoadenosine 5'-phosphosulfate reductase, found in Citrobacter koseri (strain ATCC BAA-895 / CDC 4225-83 / SGSC4696).